The chain runs to 33 residues: uncharacterized protein (33 aa).

This is an uncharacterized protein from Staphylococcus aureus (strain MW2).